A 486-amino-acid polypeptide reads, in one-letter code: Wax ester synthase/diacylglycerol acyltransferase 11 (486 aa).

Residues 1-192 (MGEDKKTARE…CNSGFFNKIW (192 aa)) are Cytoplasmic-facing. Residue histidine 144 is the Proton acceptor of the active site. Residues 193–213 (WLFVGLWFILRLLFNTFVDIL) traverse the membrane as a helical segment. The Extracellular portion of the chain corresponds to 214-486 (MFALTIFVLR…LERGLYEIEV (273 aa)).

In the N-terminal section; belongs to the long-chain O-acyltransferase family. As to expression, mostly expressed in inflorescences and flowers, especially at the periphery of petal epidermal cells.

The protein resides in the cell membrane. It localises to the endoplasmic reticulum membrane. The enzyme catalyses an acyl-CoA + a 1,2-diacyl-sn-glycerol = a triacyl-sn-glycerol + CoA. The catalysed reaction is a long chain fatty alcohol + a fatty acyl-CoA = a wax ester + CoA. Its pathway is glycerolipid metabolism; triacylglycerol biosynthesis. The protein operates within lipid metabolism. Bifunctional wax ester synthase/diacylglycerol acyltransferase. Involved in cuticular wax biosynthesis. Required for petals development, probably by mediating the production of fatty acids at the plasma membrane in the petal epidermis acting as lubricants that makes petal elongation smooth in narrow space between the sepals and the anthers inside floral buds. This Arabidopsis thaliana (Mouse-ear cress) protein is Wax ester synthase/diacylglycerol acyltransferase 11.